The chain runs to 493 residues: UDP-N-acetylmuramate--L-alanine ligase (493 aa).

Gly-126–Thr-132 is a binding site for ATP.

This sequence belongs to the MurCDEF family.

The protein resides in the cytoplasm. It catalyses the reaction UDP-N-acetyl-alpha-D-muramate + L-alanine + ATP = UDP-N-acetyl-alpha-D-muramoyl-L-alanine + ADP + phosphate + H(+). The protein operates within cell wall biogenesis; peptidoglycan biosynthesis. Its function is as follows. Cell wall formation. The sequence is that of UDP-N-acetylmuramate--L-alanine ligase from Hamiltonella defensa subsp. Acyrthosiphon pisum (strain 5AT).